We begin with the raw amino-acid sequence, 571 residues long: Glutamate--tRNA ligase (571 aa).

The 'HIGH' region motif lies at P110–S120.

The protein belongs to the class-I aminoacyl-tRNA synthetase family. Glutamate--tRNA ligase type 2 subfamily.

It is found in the cytoplasm. The enzyme catalyses tRNA(Glu) + L-glutamate + ATP = L-glutamyl-tRNA(Glu) + AMP + diphosphate. In terms of biological role, catalyzes the attachment of glutamate to tRNA(Glu) in a two-step reaction: glutamate is first activated by ATP to form Glu-AMP and then transferred to the acceptor end of tRNA(Glu). This is Glutamate--tRNA ligase from Methanosarcina barkeri (strain Fusaro / DSM 804).